A 266-amino-acid chain; its full sequence is Small ribosomal subunit protein eS1 (266 aa).

Residues 233 to 266 are disordered; it reads GEGGGSSAAKPSGDDTGAKVDRADGYEPPIQETV. Positions 244 to 257 are enriched in basic and acidic residues; that stretch reads SGDDTGAKVDRADG.

The protein belongs to the eukaryotic ribosomal protein eS1 family. Component of the small ribosomal subunit. Mature ribosomes consist of a small (40S) and a large (60S) subunit. The 40S subunit contains about 33 different proteins and 1 molecule of RNA (18S). The 60S subunit contains about 49 different proteins and 3 molecules of RNA (28S, 5.8S and 5S). Part of the small subunit (SSU) processome, composed of more than 70 proteins and the RNA chaperone small nucleolar RNA (snoRNA) U3.

Its subcellular location is the cytoplasm. The protein localises to the nucleus. The protein resides in the nucleolus. Functionally, component of the small ribosomal subunit. The ribosome is a large ribonucleoprotein complex responsible for the synthesis of proteins in the cell. Part of the small subunit (SSU) processome, first precursor of the small eukaryotic ribosomal subunit. During the assembly of the SSU processome in the nucleolus, many ribosome biogenesis factors, an RNA chaperone and ribosomal proteins associate with the nascent pre-rRNA and work in concert to generate RNA folding, modifications, rearrangements and cleavage as well as targeted degradation of pre-ribosomal RNA by the RNA exosome. May play a role during erythropoiesis. The sequence is that of Small ribosomal subunit protein eS1 (rps3a) from Salmo salar (Atlantic salmon).